The sequence spans 302 residues: tRNA-cytidine(32) 2-sulfurtransferase (302 aa).

The PP-loop motif signature appears at 43–48 (SGGKDS). [4Fe-4S] cluster contacts are provided by C118, C121, and C209.

Belongs to the TtcA family. In terms of assembly, homodimer. Mg(2+) serves as cofactor. Requires [4Fe-4S] cluster as cofactor.

The protein localises to the cytoplasm. The catalysed reaction is cytidine(32) in tRNA + S-sulfanyl-L-cysteinyl-[cysteine desulfurase] + AH2 + ATP = 2-thiocytidine(32) in tRNA + L-cysteinyl-[cysteine desulfurase] + A + AMP + diphosphate + H(+). It participates in tRNA modification. In terms of biological role, catalyzes the ATP-dependent 2-thiolation of cytidine in position 32 of tRNA, to form 2-thiocytidine (s(2)C32). The sulfur atoms are provided by the cysteine/cysteine desulfurase (IscS) system. The protein is tRNA-cytidine(32) 2-sulfurtransferase of Polynucleobacter asymbioticus (strain DSM 18221 / CIP 109841 / QLW-P1DMWA-1) (Polynucleobacter necessarius subsp. asymbioticus).